Here is a 338-residue protein sequence, read N- to C-terminus: Glyceraldehyde-3-phosphate dehydrogenase (338 aa).

NAD(+)-binding positions include 13 to 14, Asp-35, and Arg-80; that span reads RI. D-glyceraldehyde 3-phosphate-binding positions include 151–153, Thr-182, 211–212, and Arg-234; these read SCT and TG. The active-site Nucleophile is Cys-152. Asn-317 lines the NAD(+) pocket.

The protein belongs to the glyceraldehyde-3-phosphate dehydrogenase family. As to quaternary structure, homotetramer.

It localises to the cytoplasm. The enzyme catalyses D-glyceraldehyde 3-phosphate + phosphate + NAD(+) = (2R)-3-phospho-glyceroyl phosphate + NADH + H(+). Its pathway is carbohydrate degradation; glycolysis; pyruvate from D-glyceraldehyde 3-phosphate: step 1/5. This Aspergillus oryzae (strain ATCC 42149 / RIB 40) (Yellow koji mold) protein is Glyceraldehyde-3-phosphate dehydrogenase (gpdA).